Here is a 577-residue protein sequence, read N- to C-terminus: Thiol:disulfide interchange protein DsbD (577 aa).

The N-terminal stretch at Met1 to Ala23 is a signal peptide. 2 disulfide bridges follow: Cys131/Cys137 and Cys194/Cys316. The next 7 helical transmembrane spans lie at Ala182–Ile202, Tyr225–Leu245, Tyr255–Tyr275, Leu308–Ile328, Gly338–Phe358, Trp369–Leu389, and Ala396–Leu416. The Thioredoxin domain maps to Val437–Pro577. Cys492 and Cys495 are disulfide-bonded.

The protein belongs to the thioredoxin family. DsbD subfamily.

It localises to the cell inner membrane. The catalysed reaction is [protein]-dithiol + NAD(+) = [protein]-disulfide + NADH + H(+). It catalyses the reaction [protein]-dithiol + NADP(+) = [protein]-disulfide + NADPH + H(+). Its function is as follows. Required to facilitate the formation of correct disulfide bonds in some periplasmic proteins and for the assembly of the periplasmic c-type cytochromes. Acts by transferring electrons from cytoplasmic thioredoxin to the periplasm. This transfer involves a cascade of disulfide bond formation and reduction steps. The sequence is that of Thiol:disulfide interchange protein DsbD from Pectobacterium atrosepticum (strain SCRI 1043 / ATCC BAA-672) (Erwinia carotovora subsp. atroseptica).